The following is a 392-amino-acid chain: MTLLGTALRPAATRVMLLGSGELGKEVAIECQRLGVEVIAVDRYADAPAMHVAHRSHVINMLDGDALRRVVELEKPHYIVPEIEAIATDMLIQLEEERLNVVPCARATKLTMNREGIRRLAAEELQLPTSTYRFADSESLFREAVADIGYPCIVKPVMSSSGKGQTFIRSAEQLAQAWKYAQQGGRAGAGRVIVEGVVKFDFEITLLTVSAVDGVHFCAPVGHRQEDGDYRESWQPQQMSPLALERAQEIARKVVLALGGYGLFGVELFVCSDEVIFSEVSPRPHDTGMVTLISQDLSEFALHVRAFLGLPVGGIRQYGPAASAVILPQLTSQNVTFDNVQNAVGADLQIRLFGKPEIDGSRRLGVALATAESVVDAIERAKHAAGQVKVQG.

N(1)-(5-phospho-beta-D-ribosyl)glycinamide-binding positions include Glu22 to Leu23 and Glu82. ATP is bound by residues Arg114, Lys155, Ser160–Gln165, Glu195–Val198, and Glu203. The ATP-grasp domain occupies Arg119–Leu308. Mg(2+) is bound by residues Glu267 and Glu279. Residues Asp286, Lys355, and Arg362–Arg363 each bind N(1)-(5-phospho-beta-D-ribosyl)glycinamide.

Belongs to the PurK/PurT family. As to quaternary structure, homodimer.

The catalysed reaction is N(1)-(5-phospho-beta-D-ribosyl)glycinamide + formate + ATP = N(2)-formyl-N(1)-(5-phospho-beta-D-ribosyl)glycinamide + ADP + phosphate + H(+). It participates in purine metabolism; IMP biosynthesis via de novo pathway; N(2)-formyl-N(1)-(5-phospho-D-ribosyl)glycinamide from N(1)-(5-phospho-D-ribosyl)glycinamide (formate route): step 1/1. Its function is as follows. Involved in the de novo purine biosynthesis. Catalyzes the transfer of formate to 5-phospho-ribosyl-glycinamide (GAR), producing 5-phospho-ribosyl-N-formylglycinamide (FGAR). Formate is provided by PurU via hydrolysis of 10-formyl-tetrahydrofolate. This Shigella boydii serotype 4 (strain Sb227) protein is Formate-dependent phosphoribosylglycinamide formyltransferase.